Consider the following 76-residue polypeptide: uncharacterized protein (76 aa).

The interval 1–24 (MPLRLCQGRKDRASDPVRDDGSPP) is disordered. A compositionally biased stretch (basic and acidic residues) spans 8-22 (GRKDRASDPVRDDGS).

This is an uncharacterized protein from Dryophytes versicolor (chameleon treefrog).